The chain runs to 426 residues: Spermidine/putrescine import ATP-binding protein PotA (426 aa).

One can recognise an ABC transporter domain in the interval 6–238; that stretch reads IEFKNVSKTY…PINHFVADFI (233 aa). An ATP-binding site is contributed by 40 to 47; the sequence is GASGSGKS.

It belongs to the ABC transporter superfamily. Spermidine/putrescine importer (TC 3.A.1.11.1) family. The complex is composed of two ATP-binding proteins (PotA), two transmembrane proteins (PotB and PotC) and a solute-binding protein (PotD).

Its subcellular location is the cell membrane. It catalyses the reaction ATP + H2O + polyamine-[polyamine-binding protein]Side 1 = ADP + phosphate + polyamineSide 2 + [polyamine-binding protein]Side 1.. Its function is as follows. Part of the ABC transporter complex PotABCD involved in spermidine/putrescine import. Responsible for energy coupling to the transport system. The chain is Spermidine/putrescine import ATP-binding protein PotA from Lactococcus lactis subsp. cremoris (strain SK11).